The chain runs to 1143 residues: cGMP-specific 3',5'-cyclic phosphodiesterase (1143 aa).

Composition is skewed to low complexity over residues methionine 1–serine 19 and threonine 31–serine 45. The disordered stretch occupies residues methionine 1–aspartate 167. A compositionally biased stretch (polar residues) spans lysine 46–threonine 59. Residues glycine 75–glycine 84 are compositionally biased toward low complexity. Residues serine 96–serine 107 are compositionally biased toward polar residues. Low complexity predominate over residues serine 131 to glutamine 153. 2 consecutive GAF domains span residues aspartate 272–isoleucine 424 and asparagine 456–isoleucine 637. Positions serine 667 to valine 990 constitute a PDEase domain. The active-site Proton donor is the histidine 743. 4 residues coordinate a divalent metal cation: histidine 747, histidine 783, aspartate 784, and aspartate 894. 2 disordered regions span residues glutamine 1031–leucine 1060 and serine 1090–leucine 1143. Basic and acidic residues-rich tracts occupy residues glycine 1036–arginine 1047 and serine 1090–serine 1100. The span at alanine 1109–glycine 1127 shows a compositional bias: low complexity. Over residues serine 1133–leucine 1143 the composition is skewed to basic residues. Cysteine methyl ester is present on cysteine 1140. Residue cysteine 1140 is the site of S-farnesyl cysteine attachment. The propeptide at alanine 1141–leucine 1143 is removed in mature form.

The protein belongs to the cyclic nucleotide phosphodiesterase family. In terms of assembly, interacts with PrBP. A divalent metal cation serves as cofactor.

The protein localises to the cell membrane. It catalyses the reaction 3',5'-cyclic GMP + H2O = GMP + H(+). In terms of biological role, has a role regulating cGMP transport in Malpighian tubule principal cells. The chain is cGMP-specific 3',5'-cyclic phosphodiesterase from Drosophila simulans (Fruit fly).